The following is a 503-amino-acid chain: Cytochrome P450 11B1, mitochondrial (503 aa).

A mitochondrion-targeting transit peptide spans Met-1 to Leu-24. Cys-450 contributes to the heme binding site.

This sequence belongs to the cytochrome P450 family. Heme serves as cofactor.

It is found in the mitochondrion inner membrane. The catalysed reaction is a steroid + 2 reduced [adrenodoxin] + O2 + 2 H(+) = an 11beta-hydroxysteroid + 2 oxidized [adrenodoxin] + H2O. The enzyme catalyses 11-deoxycortisol + 2 reduced [adrenodoxin] + O2 + 2 H(+) = cortisol + 2 oxidized [adrenodoxin] + H2O. It carries out the reaction 21-hydroxyprogesterone + 2 reduced [adrenodoxin] + O2 + 2 H(+) = corticosterone + 2 oxidized [adrenodoxin] + H2O. It catalyses the reaction corticosterone + 2 reduced [adrenodoxin] + O2 + 2 H(+) = 18-hydroxycorticosterone + 2 oxidized [adrenodoxin] + H2O. The catalysed reaction is 18-hydroxycorticosterone + 2 reduced [adrenodoxin] + O2 + 2 H(+) = aldosterone + 2 oxidized [adrenodoxin] + 2 H2O. The enzyme catalyses 21-hydroxyprogesterone + 2 reduced [adrenodoxin] + O2 + 2 H(+) = 19-hydroxy-11-deoxycorticosterone + 2 oxidized [adrenodoxin] + H2O. It carries out the reaction 19-hydroxy-11-deoxycorticosterone + 2 reduced [adrenodoxin] + O2 + 2 H(+) = 19-oxo-11-deoxycorticosterone + 2 oxidized [adrenodoxin] + 2 H2O. It functions in the pathway steroid biosynthesis; glucocorticoid biosynthesis. Its pathway is steroid hormone biosynthesis. Functionally, a cytochrome P450 monooxygenase that catalyzes the biosynthesis of aldosterone and other adrenal corticoids. Differing from other species (such as human, rat and mice), it is able to catalyze three sequential oxidative reactions of 11-deoxycorticosterone (21-hydroxyprogesterone), namely 11-beta hydroxylation, followed by two successive oxidations at C18 yielding 18-hydroxy and then 18-oxo intermediates, and ending with the formation of aldosterone. Steroid 11beta, 18- and 19-hydroxylase. Mechanistically, uses molecular oxygen inserting one oxygen atom into a substrate and reducing the second into a water molecule. Two electrons are provided by NADPH via a two-protein mitochondrial transfer system comprising flavoprotein FDXR (adrenodoxin/ferredoxin reductase) and nonheme iron-sulfur protein FDX1 or FDX2 (adrenodoxin/ferredoxin). This Sus scrofa (Pig) protein is Cytochrome P450 11B1, mitochondrial (CYP11B1).